Reading from the N-terminus, the 146-residue chain is Large ribosomal subunit protein uL15 (146 aa).

Basic and acidic residues predominate over residues 1-10 (MKLHELKPAE). Residues 1–51 (MKLHELKPAEGSRQVRNRVGRGTSSGNGKTAGRGQKGQKARSGGGVRLGFE) are disordered. Composition is skewed to gly residues over residues 23 to 35 (TSSGNGKTAGRGQ) and 42 to 51 (SGGGVRLGFE).

This sequence belongs to the universal ribosomal protein uL15 family. As to quaternary structure, part of the 50S ribosomal subunit.

Its function is as follows. Binds to the 23S rRNA. This chain is Large ribosomal subunit protein uL15, found in Enterococcus faecalis (strain ATCC 700802 / V583).